Consider the following 120-residue polypeptide: Large ribosomal subunit protein bL12 (120 aa).

The protein belongs to the bacterial ribosomal protein bL12 family. As to quaternary structure, homodimer. Part of the ribosomal stalk of the 50S ribosomal subunit. Forms a multimeric L10(L12)X complex, where L10 forms an elongated spine to which 2 to 4 L12 dimers bind in a sequential fashion. Binds GTP-bound translation factors.

Forms part of the ribosomal stalk which helps the ribosome interact with GTP-bound translation factors. Is thus essential for accurate translation. The sequence is that of Large ribosomal subunit protein bL12 from Aeromonas salmonicida (strain A449).